A 272-amino-acid polypeptide reads, in one-letter code: 3-methyl-2-oxobutanoate hydroxymethyltransferase (272 aa).

Mg(2+) contacts are provided by D52 and D91. 3-methyl-2-oxobutanoate contacts are provided by residues 52–53 (DS), D91, and K121. Mg(2+) is bound at residue E123. E190 (proton acceptor) is an active-site residue.

This sequence belongs to the PanB family. As to quaternary structure, homodecamer; pentamer of dimers. Mg(2+) serves as cofactor.

The protein resides in the cytoplasm. The catalysed reaction is 3-methyl-2-oxobutanoate + (6R)-5,10-methylene-5,6,7,8-tetrahydrofolate + H2O = 2-dehydropantoate + (6S)-5,6,7,8-tetrahydrofolate. It participates in cofactor biosynthesis; (R)-pantothenate biosynthesis; (R)-pantoate from 3-methyl-2-oxobutanoate: step 1/2. Functionally, catalyzes the reversible reaction in which hydroxymethyl group from 5,10-methylenetetrahydrofolate is transferred onto alpha-ketoisovalerate to form ketopantoate. This Cytophaga hutchinsonii (strain ATCC 33406 / DSM 1761 / CIP 103989 / NBRC 15051 / NCIMB 9469 / D465) protein is 3-methyl-2-oxobutanoate hydroxymethyltransferase.